The sequence spans 380 residues: Lipid-A-disaccharide synthase (380 aa).

This sequence belongs to the LpxB family.

It catalyses the reaction a lipid X + a UDP-2-N,3-O-bis[(3R)-3-hydroxyacyl]-alpha-D-glucosamine = a lipid A disaccharide + UDP + H(+). Its pathway is bacterial outer membrane biogenesis; LPS lipid A biosynthesis. Condensation of UDP-2,3-diacylglucosamine and 2,3-diacylglucosamine-1-phosphate to form lipid A disaccharide, a precursor of lipid A, a phosphorylated glycolipid that anchors the lipopolysaccharide to the outer membrane of the cell. In Pseudomonas syringae pv. syringae (strain B728a), this protein is Lipid-A-disaccharide synthase.